Here is a 342-residue protein sequence, read N- to C-terminus: Protein RecA (342 aa).

Glycine 65–threonine 72 provides a ligand contact to ATP.

The protein belongs to the RecA family.

It localises to the cytoplasm. Can catalyze the hydrolysis of ATP in the presence of single-stranded DNA, the ATP-dependent uptake of single-stranded DNA by duplex DNA, and the ATP-dependent hybridization of homologous single-stranded DNAs. It interacts with LexA causing its activation and leading to its autocatalytic cleavage. In Caldanaerobacter subterraneus subsp. tengcongensis (strain DSM 15242 / JCM 11007 / NBRC 100824 / MB4) (Thermoanaerobacter tengcongensis), this protein is Protein RecA.